The chain runs to 480 residues: tRNA-2-methylthio-N(6)-dimethylallyladenosine synthase (480 aa).

Residues 2-118 (NRVHIKTYGC…VPGYLDNLRA (117 aa)) form the MTTase N-terminal domain. Cysteine 11, cysteine 47, and cysteine 81 together coordinate [4Fe-4S] cluster. A disordered region spans residues 145–169 (DHLLPQDSDSDSQPSTLNSQLRGAA). Residues 149-159 (PQDSDSDSQPS) are compositionally biased toward low complexity. A Radical SAM core domain is found at 171-405 (PPPQITAFVS…LELLRQNSER (235 aa)). The [4Fe-4S] cluster site is built by cysteine 185, cysteine 189, and cysteine 192. A TRAM domain is found at 408–470 (ALLLDTVEEV…VSTLYGELML (63 aa)).

It belongs to the methylthiotransferase family. MiaB subfamily. As to quaternary structure, monomer. [4Fe-4S] cluster serves as cofactor.

Its subcellular location is the cytoplasm. It catalyses the reaction N(6)-dimethylallyladenosine(37) in tRNA + (sulfur carrier)-SH + AH2 + 2 S-adenosyl-L-methionine = 2-methylsulfanyl-N(6)-dimethylallyladenosine(37) in tRNA + (sulfur carrier)-H + 5'-deoxyadenosine + L-methionine + A + S-adenosyl-L-homocysteine + 2 H(+). Catalyzes the methylthiolation of N6-(dimethylallyl)adenosine (i(6)A), leading to the formation of 2-methylthio-N6-(dimethylallyl)adenosine (ms(2)i(6)A) at position 37 in tRNAs that read codons beginning with uridine. In Opitutus terrae (strain DSM 11246 / JCM 15787 / PB90-1), this protein is tRNA-2-methylthio-N(6)-dimethylallyladenosine synthase.